The sequence spans 554 residues: (Z)-gamma-bisabolene synthase 1 (554 aa).

The Mg(2+) site is built by aspartate 306, aspartate 310, aspartate 450, and aspartate 458. A DDXXD motif motif is present at residues 306–310 (DDACD).

It belongs to the terpene synthase family. Tpsa subfamily. The cofactor is Mg(2+). It depends on Mn(2+) as a cofactor. Predominantly expressed in roots. Expressed in the cortex and the sub-epidermal layers of roots. Also detected in leaf hydathodes and flower stigmata.

The protein localises to the cytoplasm. The enzyme catalyses (2E,6E)-farnesyl diphosphate = (Z)-gamma-bisabolene + diphosphate. The protein operates within secondary metabolite biosynthesis; terpenoid biosynthesis. Its function is as follows. Involved in sesquiterpene (C15) biosynthesis. The major product is (Z)-gamma-bisabolene with minor amounts of (E)-nerolidol and alpha-bisabolol. The chain is (Z)-gamma-bisabolene synthase 1 (TPS12) from Arabidopsis thaliana (Mouse-ear cress).